The primary structure comprises 466 residues: Argininosuccinate lyase (466 aa).

The protein belongs to the lyase 1 family. Argininosuccinate lyase subfamily.

The protein resides in the cytoplasm. The catalysed reaction is 2-(N(omega)-L-arginino)succinate = fumarate + L-arginine. It functions in the pathway amino-acid biosynthesis; L-arginine biosynthesis; L-arginine from L-ornithine and carbamoyl phosphate: step 3/3. The protein is Argininosuccinate lyase of Brucella anthropi (strain ATCC 49188 / DSM 6882 / CCUG 24695 / JCM 21032 / LMG 3331 / NBRC 15819 / NCTC 12168 / Alc 37) (Ochrobactrum anthropi).